Here is a 437-residue protein sequence, read N- to C-terminus: GTPase Obg (437 aa).

An Obg domain is found at 2-160 (SMFLDTAKIS…RQLELELKIL (159 aa)). The OBG-type G domain occupies 161–338 (ADVGLVGFPS…LLEATAELLA (178 aa)). Residues 167–174 (GFPSVGKS), 192–196 (FTTIV), 214–217 (DLPG), 284–287 (NKMD), and 319–321 (SSL) each bind GTP. Mg(2+) is bound by residues S174 and T194. In terms of domain architecture, OCT spans 359-437 (GFAEAEKEFE…IGKFEFEFVD (79 aa)).

Belongs to the TRAFAC class OBG-HflX-like GTPase superfamily. OBG GTPase family. Monomer. Mg(2+) is required as a cofactor.

Its subcellular location is the cytoplasm. In terms of biological role, an essential GTPase which binds GTP, GDP and possibly (p)ppGpp with moderate affinity, with high nucleotide exchange rates and a fairly low GTP hydrolysis rate. Plays a role in control of the cell cycle, stress response, ribosome biogenesis and in those bacteria that undergo differentiation, in morphogenesis control. In Streptococcus pyogenes serotype M3 (strain ATCC BAA-595 / MGAS315), this protein is GTPase Obg.